The primary structure comprises 252 residues: tRNA (guanine-N(1)-)-methyltransferase (252 aa).

Residues Gly113 and 133–138 (LGDYVL) each bind S-adenosyl-L-methionine.

It belongs to the RNA methyltransferase TrmD family. In terms of assembly, homodimer.

Its subcellular location is the cytoplasm. The enzyme catalyses guanosine(37) in tRNA + S-adenosyl-L-methionine = N(1)-methylguanosine(37) in tRNA + S-adenosyl-L-homocysteine + H(+). Its function is as follows. Specifically methylates guanosine-37 in various tRNAs. This Stenotrophomonas maltophilia (strain K279a) protein is tRNA (guanine-N(1)-)-methyltransferase.